A 256-amino-acid chain; its full sequence is MGHWNRIKIAKCQILITNFLVLLLGLSMATMVVVIHFGDHFTVIGHASLERNPYETLRYWAFYVGISLAGLLSLGAALSTIATVREAHGLMAAGFLCFALSFCILVQVAFWRFYNPTQVEDAVLDTYDFVYDQAMKSPSSNWWQELAVIQDTFLCCGKKSPFGLLVSTGAIMCQGREAMREDCLQSIRNVLWTHYSIASILTCTSLALTVYAMMLCAFLWFAIHSYHGLDRKGRYSLTPPRSHGFQTQEPSLFRWT.

4 helical membrane passes run L15–I35, A61–I81, L90–F110, and C203–I223.

The protein belongs to the tetraspanin (TM4SF) family. Expressed exclusively in hematopoietic tissues. Expression detected in spleen, thymus, bone marrow and peripheral blood leukocytes but not in heart, brain, lung, liver, kidney or testis.

The protein localises to the membrane. The chain is Tetraspanin-32 (Tspan32) from Mus musculus (Mouse).